Here is a 434-residue protein sequence, read N- to C-terminus: Enolase (434 aa).

Substrate contacts are provided by H158 and E167. The active-site Proton donor is the E210. D245, E294, and D319 together coordinate Mg(2+). Substrate is bound by residues E294 and D319. K344 (proton acceptor) is an active-site residue. Substrate contacts are provided by residues 371 to 374 and K395; that span reads SHRS.

The protein belongs to the enolase family. Homodimer. It depends on Mg(2+) as a cofactor.

Its subcellular location is the cytoplasm. The catalysed reaction is (2R)-2-phosphoglycerate = phosphoenolpyruvate + H2O. The protein operates within carbohydrate degradation; glycolysis; pyruvate from D-glyceraldehyde 3-phosphate: step 4/5. In Doryteuthis pealeii (Longfin inshore squid), this protein is Enolase.